We begin with the raw amino-acid sequence, 334 residues long: Ornithine carbamoyltransferase (334 aa).

Residues 57-60 (STRT), Arg108, and 135-138 (HPTQ) each bind carbamoyl phosphate. L-ornithine-binding positions include Asn168, Asp232, and 236–237 (SM). Residues 274 to 275 (CL) and Arg321 each bind carbamoyl phosphate.

Belongs to the aspartate/ornithine carbamoyltransferase superfamily. OTCase family.

The protein localises to the cytoplasm. The enzyme catalyses carbamoyl phosphate + L-ornithine = L-citrulline + phosphate + H(+). It participates in amino-acid biosynthesis; L-arginine biosynthesis; L-arginine from L-ornithine and carbamoyl phosphate: step 1/3. In terms of biological role, reversibly catalyzes the transfer of the carbamoyl group from carbamoyl phosphate (CP) to the N(epsilon) atom of ornithine (ORN) to produce L-citrulline. The polypeptide is Ornithine carbamoyltransferase (Cutibacterium acnes (strain DSM 16379 / KPA171202) (Propionibacterium acnes)).